The following is a 211-amino-acid chain: Ribonuclease HII (211 aa).

One can recognise an RNase H type-2 domain in the interval 2-211 (MLILGVDEAG…TAQRLKASSV (210 aa)). Positions 8, 9, and 106 each coordinate a divalent metal cation.

The protein belongs to the RNase HII family. Mn(2+) serves as cofactor. It depends on Mg(2+) as a cofactor.

Its subcellular location is the cytoplasm. The enzyme catalyses Endonucleolytic cleavage to 5'-phosphomonoester.. Its function is as follows. Endonuclease that specifically degrades the RNA of RNA-DNA hybrids. The sequence is that of Ribonuclease HII from Methanothrix thermoacetophila (strain DSM 6194 / JCM 14653 / NBRC 101360 / PT) (Methanosaeta thermophila).